Here is a 359-residue protein sequence, read N- to C-terminus: Ribosomal RNA large subunit methyltransferase M (359 aa).

S-adenosyl-L-methionine is bound by residues serine 186, 219–222 (CPGG), aspartate 238, aspartate 258, and aspartate 275. The Proton acceptor role is filled by lysine 304.

The protein belongs to the class I-like SAM-binding methyltransferase superfamily. RNA methyltransferase RlmE family. RlmM subfamily. In terms of assembly, monomer.

Its subcellular location is the cytoplasm. It catalyses the reaction cytidine(2498) in 23S rRNA + S-adenosyl-L-methionine = 2'-O-methylcytidine(2498) in 23S rRNA + S-adenosyl-L-homocysteine + H(+). Its function is as follows. Catalyzes the 2'-O-methylation at nucleotide C2498 in 23S rRNA. This chain is Ribosomal RNA large subunit methyltransferase M, found in Vibrio parahaemolyticus serotype O3:K6 (strain RIMD 2210633).